The chain runs to 464 residues: 17,18-epoxy-17-hydroxycur-19-ene N-malonyltransferase (464 aa).

Catalysis depends on proton acceptor residues His-191 and Asp-403.

Belongs to the plant acyltransferase family. In terms of assembly, monomer. Mainly expressed in roots.

The protein resides in the cytoplasm. The enzyme catalyses 17,18-epoxy-17-hydroxycur-19-ene + malonyl-CoA = prestrychnine + CoA. Its pathway is alkaloid biosynthesis. Its function is as follows. Malonylransferase involved in the biosynthesis of curare monoterpene indole alkaloids (MIAs), natural products such as strychnine, a neurotoxic compound used as a pesticide to control rodents, and its pharmacologically active derivatives, including brucine, used to regulate blood pressure. Curare alkaloids act as animal glycine receptor antagonists. Catalyzes the conversion of 17,18-epoxy-17-hydroxycur-19-ene (Wieland-Gumlich aldehyde) to prestrychnine, which is spontaneously converted into strychnine and isostrychnine. The sequence is that of 17,18-epoxy-17-hydroxycur-19-ene N-malonyltransferase from Strychnos nux-vomica (Poison nut).